An 85-amino-acid polypeptide reads, in one-letter code: Toxin Cll6 (85 aa).

The first 19 residues, 1-19 (MNSLLMIIGCLVLIGTVWT), serve as a signal peptide directing secretion. The region spanning 20 to 83 (KEGYLVNMKT…TWPLPGKSCS (64 aa)) is the LCN-type CS-alpha/beta domain. 4 disulfides stabilise this stretch: cysteine 31–cysteine 82, cysteine 35–cysteine 58, cysteine 44–cysteine 63, and cysteine 48–cysteine 65. Residue serine 83 is modified to Serine amide.

It belongs to the long (4 C-C) scorpion toxin superfamily. Sodium channel inhibitor family. Beta subfamily. In terms of tissue distribution, expressed by the venom gland.

The protein localises to the secreted. Its function is as follows. Beta toxins bind voltage-independently at site-4 of sodium channels (Nav) and shift the voltage of activation toward more negative potentials thereby affecting sodium channel activation and promoting spontaneous and repetitive firing. The sequence is that of Toxin Cll6 from Centruroides limpidus (Mexican scorpion).